A 795-amino-acid chain; its full sequence is Delta-1-pyrroline-5-carboxylate synthase (795 aa).

Residues 1–361 (MLSQVYRCGF…FFSEVKPAGP (361 aa)) form a glutamate 5-kinase region. The substrate site is built by Ser-117, Asp-223, and Asn-246. ATP-binding positions include 266-267 (SD) and 305-311 (MGGMEAK). Lys-311, Lys-347, and Lys-550 each carry N6-succinyllysine. The tract at residues 362–795 (TVEQQGEMAR…NLPIPQRNTN (434 aa)) is gamma-glutamyl phosphate reductase.

This sequence in the N-terminal section; belongs to the glutamate 5-kinase family. The protein in the C-terminal section; belongs to the gamma-glutamyl phosphate reductase family. Can form homodimers/multimers.

It localises to the mitochondrion. The protein localises to the mitochondrion matrix. It catalyses the reaction L-glutamate + ATP = L-glutamyl 5-phosphate + ADP. It carries out the reaction L-glutamate 5-semialdehyde + phosphate + NADP(+) = L-glutamyl 5-phosphate + NADPH + H(+). It functions in the pathway amino-acid biosynthesis; L-proline biosynthesis; L-glutamate 5-semialdehyde from L-glutamate: step 1/2. Its pathway is amino-acid biosynthesis; L-proline biosynthesis; L-glutamate 5-semialdehyde from L-glutamate: step 2/2. With respect to regulation, isoform Short: Inhibited by L-ornithine with a Ki of approximately 0.25 mm. Isoform Long: Insensitive to ornithine inhibition. This is due to the two amino acid insert which abolishes feedback inhibition of P5CS activity by L-ornithine. Functionally, bifunctional enzyme that converts glutamate to glutamate 5-semialdehyde, an intermediate in the biosynthesis of proline, ornithine and arginine. The chain is Delta-1-pyrroline-5-carboxylate synthase (ALDH18A1) from Homo sapiens (Human).